Here is a 493-residue protein sequence, read N- to C-terminus: GTPase Der (493 aa).

In terms of domain architecture, EngA-type G 1 spans 3 to 166 (PVIALVGRPN…EALGIFPKDN (164 aa)). GTP-binding positions include 9–16 (GRPNVGKS), 56–60 (DTGGI), and 118–121 (NKVD). Residues 166–195 (NAEEEGEGEPASEEVAEGEEPTRIPGPSEK) form a disordered region. The span at 167–184 (AEEEGEGEPASEEVAEGE) shows a compositional bias: acidic residues. The region spanning 198–371 (IKIAIIGRPN…SVQESFRSAV (174 aa)) is the EngA-type G 2 domain. GTP-binding positions include 204-211 (GRPNVGKS), 251-255 (DTAGV), and 316-319 (NKWD). Positions 372-456 (TRWPTSRLTS…PIRIEYKGGE (85 aa)) constitute a KH-like domain. The segment covering 454–463 (GGENPYEGKK) has biased composition (basic and acidic residues). The disordered stretch occupies residues 454–493 (GGENPYEGKKNSLTARQVNKKRRLMSHHKKAEKKKKDKRR). Residues 471 to 493 (VNKKRRLMSHHKKAEKKKKDKRR) show a composition bias toward basic residues.

This sequence belongs to the TRAFAC class TrmE-Era-EngA-EngB-Septin-like GTPase superfamily. EngA (Der) GTPase family. In terms of assembly, associates with the 50S ribosomal subunit.

Functionally, GTPase that plays an essential role in the late steps of ribosome biogenesis. The protein is GTPase Der of Pseudomonas aeruginosa (strain UCBPP-PA14).